The following is a 426-amino-acid chain: Probable M18 family aminopeptidase 2 (426 aa).

H79, H156, and H399 together coordinate Zn(2+).

It belongs to the peptidase M18 family. Requires Zn(2+) as cofactor.

This Mycobacterium leprae (strain TN) protein is Probable M18 family aminopeptidase 2 (apeB).